The chain runs to 149 residues: Inner membrane protein YdcZ (149 aa).

Topologically, residues 1-4 (MNQS) are periplasmic. A helical membrane pass occupies residues 5 to 25 (LTLAFLIAAGIGLVVQNTLMV). Topologically, residues 26–33 (RITQTSST) are cytoplasmic. Residues 34 to 54 (ILIAMLLNSLVGIVLFVSILW) form a helical membrane-spanning segment. Residues 55-70 (FKQGMAGFGELVSSVR) are Periplasmic-facing. A helical membrane pass occupies residues 71–91 (WWTLIPGLLGSFFVFASISGY). Topologically, residues 92 to 93 (QN) are cytoplasmic. The chain crosses the membrane as a helical span at residues 94–114 (VGAATTIAVLVASQLIGGLML). At 115 to 123 (DIFRSHGVP) the chain is on the periplasmic side. Residues 124-144 (LRALFGPICGAILLVVGAWLV) traverse the membrane as a helical segment. Residues 145–149 (ARRSF) are Cytoplasmic-facing.

It is found in the cell inner membrane. The polypeptide is Inner membrane protein YdcZ (ydcZ) (Escherichia coli (strain K12)).